The primary structure comprises 492 residues: WD repeat-containing protein JIP5 (492 aa).

WD repeat units follow at residues 127 to 166 (RHKGSVRAMCFDSKGDNIFSVGSDNVLKKANTMTGKVVKK), 178 to 217 (KKNDKFTKLCASQTHPFILIGDESGNIHVINSENLALSNS), 236 to 274 (RSAYKFISLGQTTLAYFDVRDKDAKPNVAGNEDGKILIS), 276 to 317 (DQED…LEDQ), and 365 to 405 (RNHS…VEEN). Acidic residues-rich tracts occupy residues 404 to 414 (ENASVESDSDE) and 422 to 433 (DLSDDTSSDDET). Residues 404 to 472 (ENASVESDSD…SKSVKKRKIM (69 aa)) are disordered. Residues 449 to 462 (KDLKEDHQEEKESN) show a composition bias toward basic and acidic residues.

In terms of assembly, interacts with BUD27 and GIS1.

The protein resides in the nucleus. It is found in the nucleolus. The protein is WD repeat-containing protein JIP5 (JIP5) of Saccharomyces cerevisiae (strain ATCC 204508 / S288c) (Baker's yeast).